The primary structure comprises 294 residues: 33 kDa chaperonin (294 aa).

2 disulfide bridges follow: Cys-238–Cys-240 and Cys-271–Cys-274.

Belongs to the HSP33 family. Under oxidizing conditions two disulfide bonds are formed involving the reactive cysteines. Under reducing conditions zinc is bound to the reactive cysteines and the protein is inactive.

The protein resides in the cytoplasm. Redox regulated molecular chaperone. Protects both thermally unfolding and oxidatively damaged proteins from irreversible aggregation. Plays an important role in the bacterial defense system toward oxidative stress. This is 33 kDa chaperonin from Caldanaerobacter subterraneus subsp. tengcongensis (strain DSM 15242 / JCM 11007 / NBRC 100824 / MB4) (Thermoanaerobacter tengcongensis).